A 383-amino-acid chain; its full sequence is MGAGGRMQDPTNGGNKTEPEPIQRVPHEKPPFTVGDIKKAIPPHCFNRSVIRSFSYVFYDLTIASILYYIANNYISTLPSPLAYVAWPVYWAVQGCVLTGVWVIAHECGHHAFSDHQWLDDTVGLVLHSFLLVPYFSWKYSHRRHHSNTGSIEHDEVFVPKLKSGVRSTARYLNNPPGRILTLLVTLTLGWPLYLTFNVSGRYYDRFACHFDPNSPIYSKRERAQIFISDAGILAVVFVLFRLAMTKGLTWVLTMYGGPLLVVNGFLVLITFLQHTHPSLPHYDSTEWDWLRGALTTIDRDYGILNKVFHNITDTHVAHHLFSTMPHYHAMEATKVIKPILGDYYQFDGTSIFKAMYRETKECIYVDKDEEVKDGVYWYRNKI.

Residues 1–29 (MGAGGRMQDPTNGGNKTEPEPIQRVPHEK) form a disordered region. Residues 17 to 29 (TEPEPIQRVPHEK) show a composition bias toward basic and acidic residues. 2 helical membrane passes run 50–70 (VIRS…LYYI) and 85–105 (VAWP…WVIA). The Histidine box-1 motif lies at 106–110 (HECGH). A helical membrane pass occupies residues 118–138 (WLDDTVGLVLHSFLLVPYFSW). Positions 142–146 (HRRHH) match the Histidine box-2 motif. 3 consecutive transmembrane segments (helical) span residues 180–200 (ILTL…FNVS), 226–246 (IFIS…LAMT), and 252–272 (VLTM…LITF). The Histidine box-3 signature appears at 316 to 320 (HVAHH).

Belongs to the fatty acid desaturase type 1 family. As to expression, expressed in leaves, flower buds and developing seeds.

Its subcellular location is the membrane. It functions in the pathway lipid metabolism; polyunsaturated fatty acid biosynthesis. Catalyzes the desaturation of oleic acid to linoleic acid. Introduces a double bond at position 12 of 16:1(9Z) and 18:1(9Z). This is Delta(12) fatty acid desaturase FAD2 from Calendula officinalis (Pot marigold).